The chain runs to 501 residues: Aspartyl/glutamyl-tRNA(Asn/Gln) amidotransferase subunit B (501 aa).

The protein belongs to the GatB/GatE family. GatB subfamily. As to quaternary structure, heterotrimer of A, B and C subunits.

It catalyses the reaction L-glutamyl-tRNA(Gln) + L-glutamine + ATP + H2O = L-glutaminyl-tRNA(Gln) + L-glutamate + ADP + phosphate + H(+). It carries out the reaction L-aspartyl-tRNA(Asn) + L-glutamine + ATP + H2O = L-asparaginyl-tRNA(Asn) + L-glutamate + ADP + phosphate + 2 H(+). Functionally, allows the formation of correctly charged Asn-tRNA(Asn) or Gln-tRNA(Gln) through the transamidation of misacylated Asp-tRNA(Asn) or Glu-tRNA(Gln) in organisms which lack either or both of asparaginyl-tRNA or glutaminyl-tRNA synthetases. The reaction takes place in the presence of glutamine and ATP through an activated phospho-Asp-tRNA(Asn) or phospho-Glu-tRNA(Gln). This Mycobacterium sp. (strain KMS) protein is Aspartyl/glutamyl-tRNA(Asn/Gln) amidotransferase subunit B.